The following is a 493-amino-acid chain: MNKDVDYQTFKKSLRKEFKKAVKTILNLQAYNGDLIRDFLALYIPYHVVFYNLSIMKKGSPLRIQTNNLLKEALAKILNFNLAMGPKHIIKIMKKDKADPETMNKLKLVLYIKLFQGVFGHVDKNYNLAFQSFRWCLQFIAYSKRTRLFASIADEQIGAFYELCELFISMLCCHCFLIDLKENEALVGNNLKNFIKRQNPNYSHGFDLNEETKSLQWHWSLDEVDVIEALYCVAFDAMDKITLKFSKVNENFVFSQFFQYCAEIEEMLAILRGKIWECECDVFGPRIGLLVDSNHMNETIQKNILSITFKLKNDPQIICCLNKILEGLLLSSGVQFKVIQFFYVLKLYYMQDNEYTFEASSEMDKLTIECLCIIENIIDACDNPDEVTDYQLPKVLLTAMEGKLLVAEKISEDNDCSESLDDYHPRTYQFRHPRIIIDKMKTKLKQKLRFDSPKDPETDDHWIEYWKYCYQDNIGNLPDILSRIYQTFTDPSN.

Interacts with CNM67, SPO21/MPC70 and NUD1.

The protein localises to the cytoplasm. The protein resides in the cytoskeleton. It localises to the microtubule organizing center. It is found in the spindle pole body. Functionally, involved in the pathway that organizes the shaping and sizing of the prospore membrane (PSM) during sporulation. May be required to stabilize the outer plaque of the spindle pole body (SPB). In Saccharomyces cerevisiae (strain ATCC 204508 / S288c) (Baker's yeast), this protein is Accumulates dyads protein 4 (ADY4).